The sequence spans 886 residues: DNA repair and recombination protein RAD54B (886 aa).

Residues 1 to 12 (MRRSAAPSQVQG) are compositionally biased toward polar residues. The segment at 1-95 (MRRSAAPSQV…ASKEITESKA (95 aa)) is disordered. Ser-14 is subject to Phosphoserine. The span at 47-62 (AEQSQNDPGVCSSNPC) shows a compositional bias: polar residues. Basic and acidic residues-rich tracts occupy residues 67–76 (IPREVGDGTR) and 86–95 (ASKEITESKA). Residues 291–458 (GMRAVGKCGA…FALVDFVNPG (168 aa)) enclose the Helicase ATP-binding domain. ATP is bound at residue 304–311 (DEMGLGKT). A DEGH box motif is present at residues 409–412 (DEGH). The Helicase C-terminal domain occupies 627–788 (KLLAVIHELR…HIQFSVEELK (162 aa)).

Belongs to the SNF2/RAD54 helicase family. Interacts with RAD51 through the NH2-terminal domain.

It is found in the nucleus. Involved in DNA repair and mitotic recombination. May play an active role in recombination processes in concert with other members of the RAD52 epistasis group. The polypeptide is DNA repair and recombination protein RAD54B (Rad54b) (Mus musculus (Mouse)).